The sequence spans 476 residues: Bifunctional protein HldE (476 aa).

Residues 1 to 319 (MKVSLPAFEK…RALSVNHGES (319 aa)) form a ribokinase region. 195-198 (NMGE) contacts ATP. The active site involves Asp264. The tract at residues 345-476 (MTNGCFDILH…SIIENIMANQ (132 aa)) is cytidylyltransferase.

It in the N-terminal section; belongs to the carbohydrate kinase PfkB family. In the C-terminal section; belongs to the cytidylyltransferase family. As to quaternary structure, homodimer.

The catalysed reaction is D-glycero-beta-D-manno-heptose 7-phosphate + ATP = D-glycero-beta-D-manno-heptose 1,7-bisphosphate + ADP + H(+). The enzyme catalyses D-glycero-beta-D-manno-heptose 1-phosphate + ATP + H(+) = ADP-D-glycero-beta-D-manno-heptose + diphosphate. It functions in the pathway nucleotide-sugar biosynthesis; ADP-L-glycero-beta-D-manno-heptose biosynthesis; ADP-L-glycero-beta-D-manno-heptose from D-glycero-beta-D-manno-heptose 7-phosphate: step 1/4. Its pathway is nucleotide-sugar biosynthesis; ADP-L-glycero-beta-D-manno-heptose biosynthesis; ADP-L-glycero-beta-D-manno-heptose from D-glycero-beta-D-manno-heptose 7-phosphate: step 3/4. In terms of biological role, catalyzes the phosphorylation of D-glycero-D-manno-heptose 7-phosphate at the C-1 position to selectively form D-glycero-beta-D-manno-heptose-1,7-bisphosphate. Catalyzes the ADP transfer from ATP to D-glycero-beta-D-manno-heptose 1-phosphate, yielding ADP-D-glycero-beta-D-manno-heptose. In Shewanella sediminis (strain HAW-EB3), this protein is Bifunctional protein HldE.